A 128-amino-acid polypeptide reads, in one-letter code: Large ribosomal subunit protein bL20 (128 aa).

This sequence belongs to the bacterial ribosomal protein bL20 family.

In terms of biological role, binds directly to 23S ribosomal RNA and is necessary for the in vitro assembly process of the 50S ribosomal subunit. It is not involved in the protein synthesizing functions of that subunit. The sequence is that of Large ribosomal subunit protein bL20 from Corynebacterium efficiens (strain DSM 44549 / YS-314 / AJ 12310 / JCM 11189 / NBRC 100395).